A 754-amino-acid polypeptide reads, in one-letter code: FAD-dependent monooxygenase ntnA (754 aa).

The helical transmembrane segment at isoleucine 3–leucine 23 threads the bilayer. Residues glutamate 34, glycine 48, and arginine 109 each coordinate FAD. Residue tyrosine 218 is part of the active site. Aspartate 311 and alanine 324 together coordinate FAD. 4 consecutive transmembrane segments (helical) span residues proline 446–alanine 466, alanine 486–isoleucine 506, isoleucine 536–methionine 556, and leucine 563–cysteine 583. The N-linked (GlcNAc...) asparagine glycan is linked to asparagine 586. A helical membrane pass occupies residues serine 595–leucine 615. N-linked (GlcNAc...) asparagine glycosylation is present at asparagine 616. A run of 2 helical transmembrane segments spans residues isoleucine 644–leucine 664 and leucine 679–leucine 697. Asparagine 701 carries an N-linked (GlcNAc...) asparagine glycan. The chain crosses the membrane as a helical span at residues leucine 712–isoleucine 732.

This sequence belongs to the paxM FAD-dependent monooxygenase family. Requires FAD as cofactor.

The protein localises to the membrane. It functions in the pathway secondary metabolite biosynthesis; terpenoid biosynthesis. In terms of biological role, FAD-dependent monooxygenase; part of the gene cluster that mediates the biosynthesis of the meroterpenoids nectripenoids A and B, as well as cochliquninone D and isocochliquninone E. The pathway probably begins with the HR-PKS ntnH that catalyzes two chain-extension steps to form a reduced triketide, which then primes the SAT domain in the NR-PKS ntnG to initiate three more cycles of extension to give a linear hexaketide corresponding to the polyketide part of nectripenoids. The FAD-dependent monooxygenase ntnJ then performs an oxidative decarboxylation at C11 of the ntnH/ntnG product, via an electrophilic aromatic hydroxylation with concomitant ipso-decarboxylation. The membrane-bound polyprenyl transferase ntnF then introduces a farnesyl group before the FAD-dependent monooxygenase ntnK functions as the first epoxidase on terminal C12'-C13' olefin, followed by a second epoxidation on C7'-C8' catalyzed by ntnA. The terpene cyclase/mutase ntnI then initiates the sequential tricyclic ring formation through protonation of the terminal epoxide and catalyzes the regioselective and stereoselective 6/6/6-tricyclic ring formation. The cytochrome P450 monooxygenase ntnM may then hydroxylate C1'. The chain is FAD-dependent monooxygenase ntnA from Nectria sp.